A 3065-amino-acid chain; its full sequence is MAX gene-associated protein (3065 aa).

Glycyl lysine isopeptide (Lys-Gly) (interchain with G-Cter in SUMO2) cross-links involve residues Lys4 and Lys178. Positions 84–260 (MWNEFYHRST…YNPFAKGFRD (177 aa)) form a DNA-binding region, T-box. Residues 259–277 (RDDGLNNKPQRDGKQKNSS) are compositionally biased toward basic and acidic residues. Residues 259-322 (RDDGLNNKPQ…GHETSGKGLE (64 aa)) are disordered. Residues 278 to 289 (DQEGNNISSSSG) show a composition bias toward polar residues. The segment covering 309 to 322 (PLSRGHETSGKGLE) has biased composition (basic and acidic residues). Glycyl lysine isopeptide (Lys-Gly) (interchain with G-Cter in SUMO2) cross-links involve residues Lys323, Lys329, Lys349, Lys432, Lys460, Lys465, and Lys482. At Ser534 the chain carries Phosphoserine. Lys570 is covalently cross-linked (Glycyl lysine isopeptide (Lys-Gly) (interchain with G-Cter in SUMO2)). The tract at residues 604 to 653 (QNASPNVPGKRGRPRKLKLCKAGRPPKNTGKSLISTKNTPVSPGSTFPDV) is disordered. Ser607 is subject to Phosphoserine. Residue Lys613 forms a Glycyl lysine isopeptide (Lys-Gly) (interchain with G-Cter in SUMO2) linkage. A compositionally biased stretch (basic residues) spans 613 to 624 (KRGRPRKLKLCK). A compositionally biased stretch (polar residues) spans 632–648 (TGKSLISTKNTPVSPGS). Phosphoserine is present on Ser645. Glycyl lysine isopeptide (Lys-Gly) (interchain with G-Cter in SUMO2) cross-links involve residues Lys654, Lys785, Lys791, Lys817, and Lys826. The residue at position 851 (Ser851) is a Phosphoserine. The interval 881–911 (STSYSLKPHSVPPVSRKAKSQNRQATFSGRT) is disordered. Positions 901–911 (QNRQATFSGRT) are enriched in polar residues. At Ser924 the chain carries Phosphoserine. Lys928 is covalently cross-linked (Glycyl lysine isopeptide (Lys-Gly) (interchain with G-Cter in SUMO2)). Residues 971–990 (RQAQQQQQQQQGSRPPGLSK) form a disordered region. A compositionally biased stretch (low complexity) spans 972–981 (QAQQQQQQQQ). Glycyl lysine isopeptide (Lys-Gly) (interchain with G-Cter in SUMO2) cross-links involve residues Lys990, Lys1091, Lys1140, Lys1162, Lys1199, and Lys1207. Residues 1111–1147 (YDTLGEEAREEEEGIREEEEQLKEKKKRKKLEYTICE) are a coiled coil. The residue at position 1208 (Ser1208) is a Phosphoserine. Disordered regions lie at residues 1246-1332 (RKKE…PGGP) and 1380-1429 (RKSR…MEDI). Composition is skewed to low complexity over residues 1253–1269 (QPSS…QQTS) and 1310–1322 (KSSC…SSTS). 2 positions are modified to phosphoserine: Ser1430 and Ser1457. Glycyl lysine isopeptide (Lys-Gly) (interchain with G-Cter in SUMO2) cross-links involve residues Lys1461 and Lys1502. Disordered stretches follow at residues 1488 to 1517 (SRKP…PGKN), 1905 to 1927 (SPPE…YSSG), and 1967 to 2029 (QMKR…EDRG). Polar residues-rich tracts occupy residues 1495–1514 (LPST…TNRP) and 1911–1927 (SFAS…YSSG). The span at 1968 to 1994 (MKRESQNPDQKDETNSIKREQETKKVL) shows a compositional bias: basic and acidic residues. Residues Lys1985 and Lys1992 each participate in a glycyl lysine isopeptide (Lys-Gly) (interchain with G-Cter in SUMO2) cross-link. Residues 2008 to 2023 (IKQNSGAATSEETLND) show a composition bias toward polar residues. Residues Lys2103, Lys2113, Lys2135, Lys2139, Lys2146, Lys2159, Lys2194, Lys2206, and Lys2238 each participate in a glycyl lysine isopeptide (Lys-Gly) (interchain with G-Cter in SUMO2) cross-link. The tract at residues 2258-2316 (RRAAKSSRGNGHFQGHLLLPGEQIQPKQEKKGGRSSADFTVLDLEEDDEDDNEKTDDSI) is disordered. Arg2265 is subject to Omega-N-methylarginine. Lys2284 participates in a covalent cross-link: Glycyl lysine isopeptide (Lys-Gly) (interchain with G-Cter in SUMO2). Residues 2300–2316 (DLEEDDEDDNEKTDDSI) are compositionally biased toward acidic residues. Glycyl lysine isopeptide (Lys-Gly) (interchain with G-Cter in SUMO2) cross-links involve residues Lys2378, Lys2413, Lys2457, and Lys2532. A bHLH domain is found at 2423–2474 (YYRRTHTANERRRRGEMRDLFEKLKITLGLLHSSKVSKSLILTRAFSEIQGL). Phosphoserine is present on Ser2541. A Glycyl lysine isopeptide (Lys-Gly) (interchain with G-Cter in SUMO2) cross-link involves residue Lys2546. The tract at residues 2576–2595 (KKDQATENTSPLNTPHTSAN) is disordered. The segment covering 2581-2595 (TENTSPLNTPHTSAN) has biased composition (polar residues). Residues Lys2629, Lys2679, Lys2698, and Lys2784 each participate in a glycyl lysine isopeptide (Lys-Gly) (interchain with G-Cter in SUMO2) cross-link. The tract at residues 2668-2709 (GSKYPHEVPDSKPSDHLKDTVRNEDNSLEDKGRISSRGNRDG) is disordered. A compositionally biased stretch (basic and acidic residues) spans 2671-2709 (YPHEVPDSKPSDHLKDTVRNEDNSLEDKGRISSRGNRDG). Residues 2817 to 2841 (DDTDETLTSLLNEIAFLNQQLNDDS) adopt a coiled-coil conformation. Phosphoserine is present on residues Ser2910 and Ser2921. Residues 2944–2968 (AIDGGKNTSGLPAEPESVSSPPTLH) are disordered. At Ser2978 the chain carries Phosphoserine. Lys3041 participates in a covalent cross-link: Glycyl lysine isopeptide (Lys-Gly) (interchain with G-Cter in SUMO2).

Interacts with MAX. Requires dimerization with MAX for E-box binding. Component of some MLL1/MLL complex, at least composed of the core components KMT2A/MLL1, ASH2L, HCFC1/HCF1, WDR5 and RBBP5, as well as the facultative components BACC1, CHD8, E2F6, HSP70, INO80C, KANSL1, LAS1L, MAX, MCRS1, MGA, MYST1/MOF, PELP1, PHF20, PRP31, RING2, RUVB1/TIP49A, RUVB2/TIP49B, SENP3, TAF1, TAF4, TAF6, TAF7, TAF9 and TEX10. Interacts with ZMYND11. As to expression, highly expressed in germ cells and granulosa cells.

The protein resides in the nucleus. In terms of biological role, functions as a dual-specificity transcription factor, regulating the expression of both MAX-network and T-box family target genes. Functions as a repressor or an activator. Binds to 5'-AATTTCACACCTAGGTGTGAAATT-3' core sequence and seems to regulate MYC-MAX target genes. Suppresses transcriptional activation by MYC and inhibits MYC-dependent cell transformation. Function activated by heterodimerization with MAX. This heterodimerization serves the dual function of both generating an E-box-binding heterodimer and simultaneously blocking interaction of a corepressor. The protein is MAX gene-associated protein of Homo sapiens (Human).